The following is a 117-amino-acid chain: Ribosome-binding factor A (117 aa).

Belongs to the RbfA family. In terms of assembly, monomer. Binds 30S ribosomal subunits, but not 50S ribosomal subunits or 70S ribosomes.

It localises to the cytoplasm. One of several proteins that assist in the late maturation steps of the functional core of the 30S ribosomal subunit. Associates with free 30S ribosomal subunits (but not with 30S subunits that are part of 70S ribosomes or polysomes). Required for efficient processing of 16S rRNA. May interact with the 5'-terminal helix region of 16S rRNA. The protein is Ribosome-binding factor A of Syntrophobacter fumaroxidans (strain DSM 10017 / MPOB).